Consider the following 276-residue polypeptide: Putative phosphoenolpyruvate synthase regulatory protein (276 aa).

156–163 (GVSRSGKT) provides a ligand contact to ADP.

Belongs to the pyruvate, phosphate/water dikinase regulatory protein family. PSRP subfamily.

It carries out the reaction [pyruvate, water dikinase] + ADP = [pyruvate, water dikinase]-phosphate + AMP + H(+). The enzyme catalyses [pyruvate, water dikinase]-phosphate + phosphate + H(+) = [pyruvate, water dikinase] + diphosphate. Bifunctional serine/threonine kinase and phosphorylase involved in the regulation of the phosphoenolpyruvate synthase (PEPS) by catalyzing its phosphorylation/dephosphorylation. The protein is Putative phosphoenolpyruvate synthase regulatory protein of Acidovorax ebreus (strain TPSY) (Diaphorobacter sp. (strain TPSY)).